The sequence spans 244 residues: Serine acetyltransferase (244 aa).

The protein belongs to the transferase hexapeptide repeat family.

The protein resides in the cytoplasm. It carries out the reaction L-serine + acetyl-CoA = O-acetyl-L-serine + CoA. It functions in the pathway amino-acid biosynthesis; L-cysteine biosynthesis; L-cysteine from L-serine: step 1/2. The sequence is that of Serine acetyltransferase (cysE) from Synechococcus elongatus (strain ATCC 33912 / PCC 7942 / FACHB-805) (Anacystis nidulans R2).